The primary structure comprises 168 residues: Cell division inhibitor SulA (168 aa).

The interval 105 to 111 (ALETGNY) is ftsZ binding. Residues 161-168 (RIHSGMVH) are lon protease binding.

Belongs to the SulA family. Interacts with FtsZ. In terms of processing, is rapidly cleaved and degraded by the Lon protease once DNA damage is repaired.

Functionally, component of the SOS system and an inhibitor of cell division. Accumulation of SulA causes rapid cessation of cell division and the appearance of long, non-septate filaments. In the presence of GTP, binds a polymerization-competent form of FtsZ in a 1:1 ratio, thus inhibiting FtsZ polymerization and therefore preventing it from participating in the assembly of the Z ring. This mechanism prevents the premature segregation of damaged DNA to daughter cells during cell division. This is Cell division inhibitor SulA from Cronobacter sakazakii (strain ATCC BAA-894) (Enterobacter sakazakii).